Reading from the N-terminus, the 247-residue chain is MAGHSKWANTKHRKAAQDAKRGKIFTKIIRELVTAARLGGGDPASNPRLRAAIDKALSNNMTRDTLNRAIARGVGSDEADNMETIIYEGYGPGGTAVMVECLSDNRNRTVSDVRHAFTKTGGNLGTDGSVAYLFAKKGVISYAPGLDEDAVMEAALEAGADDVETYDDGAIDVYTTPETFGDVKDALDAAGFVAESAEVSMIPSTKAELDAETAPKLLRLIDMLEDSDDVQEVYHNGEISDEIAALL.

Belongs to the TACO1 family.

The protein resides in the cytoplasm. The polypeptide is Probable transcriptional regulatory protein plu2109 (Photorhabdus laumondii subsp. laumondii (strain DSM 15139 / CIP 105565 / TT01) (Photorhabdus luminescens subsp. laumondii)).